Reading from the N-terminus, the 321-residue chain is Phosphopantothenate--cysteine ligase 1 (321 aa).

Belongs to the PPC synthetase family. In terms of assembly, homodimer.

The catalysed reaction is (R)-4'-phosphopantothenate + L-cysteine + CTP = N-[(R)-4-phosphopantothenoyl]-L-cysteine + CMP + diphosphate + H(+). The protein operates within cofactor biosynthesis; coenzyme A biosynthesis; CoA from (R)-pantothenate: step 2/5. Its function is as follows. Catalyzes the first step in the biosynthesis of coenzyme A from vitamin B5, where cysteine is conjugated to 4'-phosphopantothenate to form 4-phosphopantothenoylcysteine. The sequence is that of Phosphopantothenate--cysteine ligase 1 from Oryza sativa subsp. japonica (Rice).